A 123-amino-acid polypeptide reads, in one-letter code: Thioredoxin H-type (123 aa).

The 118-residue stretch at 2–119 (AATAELIPAG…IEAKLLKHSQ (118 aa)) folds into the Thioredoxin domain. A disulfide bridge links Cys45 with Cys48.

This sequence belongs to the thioredoxin family. Plant H-type subfamily.

The protein localises to the cytoplasm. In terms of biological role, participates in various redox reactions through the reversible oxidation of the active center dithiol to a disulfide. The H form is known to activate a number of cytosolic enzymes. This is Thioredoxin H-type (PEC-2) from Brassica campestris (Field mustard).